Consider the following 388-residue polypeptide: Succinyl-diaminopimelate desuccinylase (388 aa).

Histidine 75 is a binding site for Zn(2+). Residue aspartate 77 is part of the active site. Aspartate 108 serves as a coordination point for Zn(2+). Glutamate 142 serves as the catalytic Proton acceptor. Zn(2+) contacts are provided by glutamate 143, glutamate 171, and histidine 361.

Belongs to the peptidase M20A family. DapE subfamily. As to quaternary structure, homodimer. Requires Zn(2+) as cofactor. Co(2+) is required as a cofactor.

The catalysed reaction is N-succinyl-(2S,6S)-2,6-diaminopimelate + H2O = (2S,6S)-2,6-diaminopimelate + succinate. Its pathway is amino-acid biosynthesis; L-lysine biosynthesis via DAP pathway; LL-2,6-diaminopimelate from (S)-tetrahydrodipicolinate (succinylase route): step 3/3. Its function is as follows. Catalyzes the hydrolysis of N-succinyl-L,L-diaminopimelic acid (SDAP), forming succinate and LL-2,6-diaminopimelate (DAP), an intermediate involved in the bacterial biosynthesis of lysine and meso-diaminopimelic acid, an essential component of bacterial cell walls. This Methylocella silvestris (strain DSM 15510 / CIP 108128 / LMG 27833 / NCIMB 13906 / BL2) protein is Succinyl-diaminopimelate desuccinylase.